The sequence spans 118 residues: Large ribosomal subunit protein bL20 (118 aa).

Belongs to the bacterial ribosomal protein bL20 family.

Its function is as follows. Binds directly to 23S ribosomal RNA and is necessary for the in vitro assembly process of the 50S ribosomal subunit. It is not involved in the protein synthesizing functions of that subunit. The chain is Large ribosomal subunit protein bL20 from Psychrobacter sp. (strain PRwf-1).